Consider the following 193-residue polypeptide: Potassium-transporting ATPase KdpC subunit (193 aa).

The chain crosses the membrane as a helical span at residues 14 to 34 (ITFTFLVLCGLVYPLIVTGIA).

It belongs to the KdpC family. In terms of assembly, the system is composed of three essential subunits: KdpA, KdpB and KdpC.

It is found in the cell membrane. Functionally, part of the high-affinity ATP-driven potassium transport (or Kdp) system, which catalyzes the hydrolysis of ATP coupled with the electrogenic transport of potassium into the cytoplasm. This subunit acts as a catalytic chaperone that increases the ATP-binding affinity of the ATP-hydrolyzing subunit KdpB by the formation of a transient KdpB/KdpC/ATP ternary complex. The chain is Potassium-transporting ATPase KdpC subunit from Bacillus cereus (strain AH820).